The chain runs to 65 residues: Large ribosomal subunit protein bL35 (65 aa).

The protein belongs to the bacterial ribosomal protein bL35 family.

The sequence is that of Large ribosomal subunit protein bL35 from Desulfitobacterium hafniense (strain DSM 10664 / DCB-2).